A 172-amino-acid chain; its full sequence is Cell division protein SepF (172 aa).

The segment at Asp-16–Ser-78 is disordered. Residues Gly-17–Glu-48 show a composition bias toward basic and acidic residues.

The protein belongs to the SepF family. As to quaternary structure, homodimer. Interacts with FtsZ.

It is found in the cytoplasm. In terms of biological role, cell division protein that is part of the divisome complex and is recruited early to the Z-ring. Probably stimulates Z-ring formation, perhaps through the cross-linking of FtsZ protofilaments. Its function overlaps with FtsA. The polypeptide is Cell division protein SepF (Renibacterium salmoninarum (strain ATCC 33209 / DSM 20767 / JCM 11484 / NBRC 15589 / NCIMB 2235)).